We begin with the raw amino-acid sequence, 602 residues long: Elongation factor 4 (602 aa).

The 183-residue stretch at 7–189 (RNIRNFSIIA…AIVQRIPAPQ (183 aa)) folds into the tr-type G domain. GTP contacts are provided by residues 19-24 (DHGKST) and 136-139 (NKID).

It belongs to the TRAFAC class translation factor GTPase superfamily. Classic translation factor GTPase family. LepA subfamily.

The protein resides in the cell inner membrane. The enzyme catalyses GTP + H2O = GDP + phosphate + H(+). In terms of biological role, required for accurate and efficient protein synthesis under certain stress conditions. May act as a fidelity factor of the translation reaction, by catalyzing a one-codon backward translocation of tRNAs on improperly translocated ribosomes. Back-translocation proceeds from a post-translocation (POST) complex to a pre-translocation (PRE) complex, thus giving elongation factor G a second chance to translocate the tRNAs correctly. Binds to ribosomes in a GTP-dependent manner. The sequence is that of Elongation factor 4 from Xylella fastidiosa (strain M23).